A 379-amino-acid polypeptide reads, in one-letter code: Multicilin (379 aa).

Disordered regions lie at residues 26 to 46 (SRRSLGKPGKPERKFVPPWKS) and 87 to 106 (LLGTEAPPSGDSPASQNPSL). Residues 175–223 (EQYWKEVADQNQRALGTALIENNQLHVTLTQKQEEIASLRERNVQLKEL) are a coiled coil. Over residues 289 to 309 (LQNRDPKRPRLQQEPDSKDCS) the composition is skewed to basic and acidic residues. Residues 289 to 311 (LQNRDPKRPRLQQEPDSKDCSTR) are disordered.

Belongs to the geminin family. As to quaternary structure, heterodimer (via coiled-coil domain) with GMNN (via coiled-coil domain); targets GMNN to the nucleus. Can form homodimers (in vitro, via coiled-coil domain), but these are much less stable than the heterodimer formed with GMNN.

The protein localises to the nucleus. Functionally, transcription regulator specifically required for multiciliate cell differentiation. Acts in a multiprotein complex containing E2F4 and E2F5 that binds and activates genes required for centriole biogenesis. Required for the deuterosome-mediated acentriolar pathway. Plays a role in mitotic cell cycle progression by promoting cell cycle exit. Modulates GMNN activity by reducing its affinity for CDT1. In Rattus norvegicus (Rat), this protein is Multicilin (Mcidas).